Reading from the N-terminus, the 1033-residue chain is Calcium-transporting ATPase 12, plasma membrane-type (1033 aa).

Residue Met1 is modified to N-acetylmethionine. Residues 1–152 lie on the Cytoplasmic side of the membrane; sequence MRDLKEYDYS…NTYHKPPPKG (152 aa). The interaction with calmodulin stretch occupies residues 25–36; it reads QRRWRFAYAAIY. Residue Ser37 is modified to Phosphoserine. The chain crosses the membrane as a helical span at residues 153-173; sequence LLFFVYEAFKDLTILILLVCA. At 174-191 the chain is on the lumenal side; that stretch reads IFSLGFGIKEHGIKEGWY. The chain crosses the membrane as a helical span at residues 192–212; the sequence is EGGSIFVAVFLVIVVSALSNF. The Cytoplasmic segment spans residues 213-341; sequence RQERQFDKLS…SERTPLQVRL (129 aa). The chain crosses the membrane as a helical span at residues 342–361; sequence DTLTSTIGKIGLTVAALVLV. Topologically, residues 362–397 are lumenal; it reads VLLVRYFTGNTEKEGKREYNGSKTPVDTVVNSVVRI. The chain crosses the membrane as a helical span at residues 398–415; the sequence is VAAAVTIVVVAIPEGLPL. Residues 416–806 lie on the Cytoplasmic side of the membrane; that stretch reads AVTLTLAYSM…KWGRCVYNNI (391 aa). Asp453 (4-aspartylphosphate intermediate) is an active-site residue. Mg(2+)-binding residues include Asp751 and Asp755. A helical transmembrane segment spans residues 807 to 825; it reads QKFIQFQLTVNVAALVINF. The Lumenal portion of the chain corresponds to 826 to 836; sequence IAAISAGEVPL. Residues 837–857 traverse the membrane as a helical segment; it reads TAVQLLWVNLIMDTLGALALA. At 858 to 877 the chain is on the cytoplasmic side; it reads TERPTNELLKRKPVGRTEAL. Residues 878 to 900 form a helical membrane-spanning segment; that stretch reads ITNVMWRNLLVQSLYQIAVLLIL. Over 901-909 the chain is Lumenal; that stretch reads QFKGMSIFS. Residues 910–930 traverse the membrane as a helical segment; the sequence is VRKEVKDTLIFNTFVLCQVFN. The Cytoplasmic segment spans residues 931-948; that stretch reads EFNAREMEKKNVFKGLHR. The helical transmembrane segment at 949 to 970 threads the bilayer; it reads NRLFIGIIAITIVLQVIMVEFL. Over 971–980 the chain is Lumenal; sequence KKFADTVRLN. Residues 981–1002 traverse the membrane as a helical segment; that stretch reads GWQWGTCIALASLSWPIGFFTK. Over 1003–1006 the chain is Cytoplasmic; it reads FIPV.

This sequence belongs to the cation transport ATPase (P-type) (TC 3.A.3) family. Type IIB subfamily.

The protein localises to the membrane. It carries out the reaction Ca(2+)(in) + ATP + H2O = Ca(2+)(out) + ADP + phosphate + H(+). Its activity is regulated as follows. Activated by calmodulin. Its function is as follows. This magnesium-dependent enzyme catalyzes the hydrolysis of ATP coupled with the translocation of calcium from the cytosol out of the cell or into organelles. This chain is Calcium-transporting ATPase 12, plasma membrane-type (ACA12), found in Arabidopsis thaliana (Mouse-ear cress).